Consider the following 101-residue polypeptide: Protein RnfH (101 aa).

This sequence belongs to the UPF0125 (RnfH) family.

The chain is Protein RnfH from Coxiella burnetii (strain CbuK_Q154) (Coxiella burnetii (strain Q154)).